The following is a 253-amino-acid chain: Precorrin-4 C(11)-methyltransferase (253 aa).

It belongs to the precorrin methyltransferase family.

It catalyses the reaction precorrin-4 + S-adenosyl-L-methionine = precorrin-5 + S-adenosyl-L-homocysteine. Its pathway is cofactor biosynthesis; adenosylcobalamin biosynthesis; cob(II)yrinate a,c-diamide from precorrin-2 (aerobic route): step 4/10. Catalyzes the methylation of C-11 in precorrin-4 to form precorrin-5. The sequence is that of Precorrin-4 C(11)-methyltransferase (cobM) from Sinorhizobium sp.